A 316-amino-acid polypeptide reads, in one-letter code: Ninja-family protein 2 (316 aa).

2 disordered regions span residues 1-29 and 72-236; these read MASR…GEPD and TSDD…TSTG. Residues 99-108 are compositionally biased toward basic and acidic residues; the sequence is ERWRRREMQS. The segment covering 156–166 has biased composition (polar residues); that stretch reads DQGNTSSSMPE. Composition is skewed to low complexity over residues 179-199 and 222-235; these read SSME…QNKS and LRTL…TTST.

This sequence belongs to the Ninja family.

The protein localises to the nucleus. This Triticum aestivum (Wheat) protein is Ninja-family protein 2 (AFP-B1).